We begin with the raw amino-acid sequence, 244 residues long: NAD(P)H-quinone oxidoreductase subunit K (244 aa).

[4Fe-4S] cluster is bound by residues C60, C61, C125, and C156.

Belongs to the complex I 20 kDa subunit family. NDH-1 can be composed of about 15 different subunits; different subcomplexes with different compositions have been identified which probably have different functions. Requires [4Fe-4S] cluster as cofactor.

The protein resides in the cellular thylakoid membrane. The catalysed reaction is a plastoquinone + NADH + (n+1) H(+)(in) = a plastoquinol + NAD(+) + n H(+)(out). It catalyses the reaction a plastoquinone + NADPH + (n+1) H(+)(in) = a plastoquinol + NADP(+) + n H(+)(out). NDH-1 shuttles electrons from an unknown electron donor, via FMN and iron-sulfur (Fe-S) centers, to quinones in the respiratory and/or the photosynthetic chain. The immediate electron acceptor for the enzyme in this species is believed to be plastoquinone. Couples the redox reaction to proton translocation, and thus conserves the redox energy in a proton gradient. Cyanobacterial NDH-1 also plays a role in inorganic carbon-concentration. This Prochlorococcus marinus (strain AS9601) protein is NAD(P)H-quinone oxidoreductase subunit K.